The primary structure comprises 574 residues: Putative ABC transporter ATP-binding protein VV2_1533 (574 aa).

ABC transporter domains follow at residues 3–244 and 299–533; these read IEFS…GIRE and LDVR…ANLT. ATP is bound by residues 37–44 and 332–339; these read GPSGSGKS and GKNGSGKS.

Belongs to the ABC transporter superfamily.

It is found in the cell inner membrane. Probably part of an ABC transporter complex. Responsible for energy coupling to the transport system. The polypeptide is Putative ABC transporter ATP-binding protein VV2_1533 (Vibrio vulnificus (strain CMCP6)).